Reading from the N-terminus, the 793-residue chain is MKKLLIASLLFGTTTTVFAAPFVAKDIRVDGVQGDLEQQIRASLPVRAGQRVTDNDVANIVRSLFVSGRFDDVKAHQEGDVLVVSVVAKSIISDVKIKGNSVIPTEALKQNLDANGFKVGDVLIREKLNEFAKSVKEHYASVGRYNATVEPIVNTLPNNRAEILIQINEDDKAKLASLTFKGNESVSSSTLQEQMELQPDSWWKLWGNKFEGAQFEKDLQAIRDYYLNNGYAKAQITKTDVQLNDEKTKVNVTIDVNEGLQYDLRSARIIGNLGGMSAELEPLLSALHLNDTFRRSDIADVENAIKAKLGERGYGNTTVNSVPDFDDANKTLAITFVVDAGRRLTVRQLRFEGNTVSADSTLRQEMRQQEGTWYNSQLVELGKIRLDRTGFFETVENRIDPINGSNDEVDVVYKVKERNTGSINFGIGYGTESGISYQTSIKQDNFLGTGAAVSIAGTKNDYGTSVNLGYTEPYFTKDGVSLGGNIFFENYDNSKSDTSSNYKRTTYGSNVTLGFPVNENNSYYVGLGHTYNKISNFALEYNRNLYIQSMKFKGNGIKTNDFDFSFGWNYNSLNRGYFPTKGVKASLGGRVTIPGSDNKYYKLSADVQGFYPLDRDHRWVVSAKASAGYANGFGNKRLPFYQTYTAGGIGSLRGFAYGSIGPNAIYAEHGNGTFNKISSDVIGGNAITTASAELIVPTPFVSDKSQNTVRTSLFVDAASVWNTKWKSDKNGLESKVLKDLPDYGKSSRIRASTGVGFQWQSPIGPLVFSYAKPIKKYENDDVEQFQFSIGGSF.

An N-terminal signal peptide occupies residues 1–19; the sequence is MKKLLIASLLFGTTTTVFA. 5 POTRA domains span residues 22-89, 90-170, 173-259, 262-341, and 344-418; these read FVAK…VVAK, SIIS…INED, AKLA…VNEG, YDLR…VDAG, and LTVR…VKER.

It belongs to the BamA family. Part of the Bam complex.

The protein localises to the cell outer membrane. Its function is as follows. Part of the outer membrane protein assembly complex, which is involved in assembly and insertion of beta-barrel proteins into the outer membrane. In Haemophilus influenzae, this protein is Outer membrane protein assembly factor BamA.